The primary structure comprises 254 residues: Hydroxyacylglutathione hydrolase (254 aa).

Residues histidine 52, histidine 54, aspartate 56, histidine 57, histidine 109, aspartate 126, and histidine 164 each coordinate Zn(2+).

The protein belongs to the metallo-beta-lactamase superfamily. Glyoxalase II family. Monomer. Zn(2+) serves as cofactor.

The catalysed reaction is an S-(2-hydroxyacyl)glutathione + H2O = a 2-hydroxy carboxylate + glutathione + H(+). It functions in the pathway secondary metabolite metabolism; methylglyoxal degradation; (R)-lactate from methylglyoxal: step 2/2. In terms of biological role, thiolesterase that catalyzes the hydrolysis of S-D-lactoyl-glutathione to form glutathione and D-lactic acid. The chain is Hydroxyacylglutathione hydrolase from Stenotrophomonas maltophilia (strain R551-3).